The chain runs to 261 residues: uncharacterized protein (261 aa).

E46 is an active-site residue.

It belongs to the PhzF family.

This is an uncharacterized protein from Pseudomonas aeruginosa (strain ATCC 15692 / DSM 22644 / CIP 104116 / JCM 14847 / LMG 12228 / 1C / PRS 101 / PAO1).